A 291-amino-acid chain; its full sequence is 4-diphosphocytidyl-2-C-methyl-D-erythritol kinase (291 aa).

Lys10 is a catalytic residue. An ATP-binding site is contributed by 100 to 110 (PIGGGLGGGSS). Asp142 is a catalytic residue.

This sequence belongs to the GHMP kinase family. IspE subfamily. Homodimer.

The enzyme catalyses 4-CDP-2-C-methyl-D-erythritol + ATP = 4-CDP-2-C-methyl-D-erythritol 2-phosphate + ADP + H(+). It functions in the pathway isoprenoid biosynthesis; isopentenyl diphosphate biosynthesis via DXP pathway; isopentenyl diphosphate from 1-deoxy-D-xylulose 5-phosphate: step 3/6. Functionally, catalyzes the phosphorylation of the position 2 hydroxy group of 4-diphosphocytidyl-2C-methyl-D-erythritol. The sequence is that of 4-diphosphocytidyl-2-C-methyl-D-erythritol kinase from Hamiltonella defensa subsp. Acyrthosiphon pisum (strain 5AT).